The primary structure comprises 118 residues: Developmental pluripotency-associated protein 5A (118 aa).

In terms of domain architecture, KH; atypical spans 24–86 (PEVFQVQSLV…NNKIRAKWML (63 aa)).

The protein belongs to the KHDC1 family.

The protein resides in the cytoplasm. Its function is as follows. Involved in the maintenance of embryonic stem (ES) cell pluripotency. Dispensable for self-renewal of pluripotent ES cells and establishment of germ cells. Associates with specific target mRNAs. The chain is Developmental pluripotency-associated protein 5A (Dppa5a) from Mus musculus (Mouse).